The following is a 730-amino-acid chain: Elongation factor 2 (730 aa).

A tr-type G domain is found at aspartate 19–tyrosine 229. Residues alanine 28–threonine 35, aspartate 94–histidine 98, and asparagine 148–aspartate 151 contribute to the GTP site. Residue histidine 597 is modified to Diphthamide.

Belongs to the TRAFAC class translation factor GTPase superfamily. Classic translation factor GTPase family. EF-G/EF-2 subfamily.

The protein localises to the cytoplasm. In terms of biological role, catalyzes the GTP-dependent ribosomal translocation step during translation elongation. During this step, the ribosome changes from the pre-translocational (PRE) to the post-translocational (POST) state as the newly formed A-site-bound peptidyl-tRNA and P-site-bound deacylated tRNA move to the P and E sites, respectively. Catalyzes the coordinated movement of the two tRNA molecules, the mRNA and conformational changes in the ribosome. In Methanosphaera stadtmanae (strain ATCC 43021 / DSM 3091 / JCM 11832 / MCB-3), this protein is Elongation factor 2.